Consider the following 4814-residue polypeptide: Nonribosomal peptide synthetase SIDC (4814 aa).

Residues Pro21–Ala453 are adenylation 1. The Carrier 1 domain occupies Asp528–Asp601. Residue Ser562 is modified to O-(pantetheine 4'-phosphoryl)serine. The interval Val637–Glu1045 is condensation 1. The adenylation 2 stretch occupies residues Thr1101 to Val1488. Carrier domains follow at residues Glu1589 to His1666 and Ser2134 to Gly2210. 2 positions are modified to O-(pantetheine 4'-phosphoryl)serine: Ser1626 and Ser2171. Condensation stretches follow at residues Leu1706–Gly2210 and Leu2243–Asp2649. Residues Thr2709–Val3100 are adenylation 3. Residues Ser3203 to Ser3280 form the Carrier 4 domain. Ser3240 is subject to O-(pantetheine 4'-phosphoryl)serine. Positions Tyr3319 to Ala3732 are condensation 4. Positions Glu3747–Thr3823 constitute a Carrier 5 domain. An O-(pantetheine 4'-phosphoryl)serine modification is found at Ser3784. A condensation 5 region spans residues Asp3857 to Val4258. A Carrier 6 domain is found at Asn4295–Gly4368. Ser4329 is subject to O-(pantetheine 4'-phosphoryl)serine. Residues Glu4504–Asp4686 form a condensation 6 region.

It belongs to the NRP synthetase family. It depends on pantetheine 4'-phosphate as a cofactor.

The protein operates within siderophore biosynthesis. Functionally, nonribosomal peptide synthetase; part of the gene cluster that mediates the biosynthesis of at least 11 siderophores, including beauverichelin A, dimerumic acid (DA), Na-dimethyl coprogen (NADC), eleutherazine B, ferricrocin (FC), fusarinine A, fusarinine C (FsC), metachelin A, mevalonolactone, rhodotorulic acid (RA) and tenellin. This cocktail of siderophores for iron metabolism is essential for virulence, and more specifically for the fungal virulence in penetrating through the host cuticle. Siderophore synthesis is also involved in conidial germination under iron-deficient conditions. SIDC catalyzes the assembly of ferricrocin whereas SIDD catalyzes the assembly of fusarinine C. In Beauveria bassiana (strain ARSEF 2860) (White muscardine disease fungus), this protein is Nonribosomal peptide synthetase SIDC.